The primary structure comprises 127 residues: Small ribosomal subunit protein uS13 (127 aa).

Residues 99-127 form a disordered region; the sequence is RGQRTRTNARTRRGRRGQAIGIKKKTLKK.

Belongs to the universal ribosomal protein uS13 family. In terms of assembly, part of the 30S ribosomal subunit. Forms a loose heterodimer with protein S19. Forms two bridges to the 50S subunit in the 70S ribosome.

Functionally, located at the top of the head of the 30S subunit, it contacts several helices of the 16S rRNA. In the 70S ribosome it contacts the 23S rRNA (bridge B1a) and protein L5 of the 50S subunit (bridge B1b), connecting the 2 subunits; these bridges are implicated in subunit movement. Contacts the tRNAs in the A and P-sites. The sequence is that of Small ribosomal subunit protein uS13 from Roseiflexus castenholzii (strain DSM 13941 / HLO8).